Consider the following 309-residue polypeptide: Homoserine kinase (309 aa).

91 to 101 lines the ATP pocket; that stretch reads PIGSGLGSSAC.

This sequence belongs to the GHMP kinase family. Homoserine kinase subfamily.

It is found in the cytoplasm. The enzyme catalyses L-homoserine + ATP = O-phospho-L-homoserine + ADP + H(+). It participates in amino-acid biosynthesis; L-threonine biosynthesis; L-threonine from L-aspartate: step 4/5. Its function is as follows. Catalyzes the ATP-dependent phosphorylation of L-homoserine to L-homoserine phosphate. The polypeptide is Homoserine kinase (Pectobacterium atrosepticum (strain SCRI 1043 / ATCC BAA-672) (Erwinia carotovora subsp. atroseptica)).